The following is a 497-amino-acid chain: Serine hydroxymethyltransferase (497 aa).

Residues Leu-176 and Gly-180 to Leu-182 each bind (6S)-5,6,7,8-tetrahydrofolate. The residue at position 289 (Lys-289) is an N6-(pyridoxal phosphate)lysine.

The protein belongs to the SHMT family. As to quaternary structure, homodimer. Pyridoxal 5'-phosphate serves as cofactor.

Its subcellular location is the cytoplasm. The catalysed reaction is (6R)-5,10-methylene-5,6,7,8-tetrahydrofolate + glycine + H2O = (6S)-5,6,7,8-tetrahydrofolate + L-serine. It functions in the pathway one-carbon metabolism; tetrahydrofolate interconversion. The protein operates within amino-acid biosynthesis; glycine biosynthesis; glycine from L-serine: step 1/1. Its function is as follows. Catalyzes the reversible interconversion of serine and glycine with tetrahydrofolate (THF) serving as the one-carbon carrier. This reaction serves as the major source of one-carbon groups required for the biosynthesis of purines, thymidylate, methionine, and other important biomolecules. Also exhibits THF-independent aldolase activity toward beta-hydroxyamino acids, producing glycine and aldehydes, via a retro-aldol mechanism. The sequence is that of Serine hydroxymethyltransferase from Chlamydia caviae (strain ATCC VR-813 / DSM 19441 / 03DC25 / GPIC) (Chlamydophila caviae).